The following is a 79-amino-acid chain: MAKAELRKPKPKSNPLKAADITVIDYKDVALLRKFISDRGKIRARRVTGVTVQEQRKIAQAIKNAREVALLPYSGAGRG.

Belongs to the bacterial ribosomal protein bS18 family. As to quaternary structure, part of the 30S ribosomal subunit. Forms a tight heterodimer with protein bS6.

Binds as a heterodimer with protein bS6 to the central domain of the 16S rRNA, where it helps stabilize the platform of the 30S subunit. The chain is Small ribosomal subunit protein bS18 from Pseudarthrobacter chlorophenolicus (strain ATCC 700700 / DSM 12829 / CIP 107037 / JCM 12360 / KCTC 9906 / NCIMB 13794 / A6) (Arthrobacter chlorophenolicus).